The primary structure comprises 583 residues: Ankyrin repeat-containing protein NPR4 (583 aa).

ANK repeat units follow at residues 68 to 97, 119 to 148, 154 to 183, 188 to 218, 223 to 252, 257 to 286, and 291 to 321; these read HNDT…AAVA, AGET…AEGV, SGYD…LLAK, ANTS…GLVE, NGKN…QLAR, KGQT…AIVM, and NGNT…HVNA. The next 4 helical transmembrane spans lie at 414–434, 452–472, 492–512, and 518–538; these read VTVV…TVPG, IFFI…VVQI, LMWL…YIVL, and WAAL…LGTM.

The protein localises to the cell membrane. Functionally, involved in salt stress tolerance. The chain is Ankyrin repeat-containing protein NPR4 from Oryza sativa subsp. japonica (Rice).